We begin with the raw amino-acid sequence, 44 residues long: METPAFFFTTFLGCLLLSITGYSIYVGFGPPSKQLRDPFEEHED.

A helical membrane pass occupies residues 7-29 (FFTTFLGCLLLSITGYSIYVGFG).

This sequence belongs to the PsbN family.

The protein resides in the plastid. Its subcellular location is the chloroplast thylakoid membrane. Functionally, may play a role in photosystem I and II biogenesis. The polypeptide is Protein PsbN (Pleurastrum terricola (Filamentous green alga)).